Here is a 154-residue protein sequence, read N- to C-terminus: uncharacterized protein (154 aa).

8 residues coordinate Zn(2+): cysteine 4, cysteine 7, cysteine 16, cysteine 19, cysteine 24, cysteine 28, histidine 32, and cysteine 36. The HIT-type zinc finger occupies 4 to 36 (CSICNESEIKYKCPKCSFPYCSLPCWKIHQSQC).

This is an uncharacterized protein from Schizosaccharomyces pombe (strain 972 / ATCC 24843) (Fission yeast).